A 1406-amino-acid chain; its full sequence is DNA-directed RNA polymerase subunit beta' (1406 aa).

C70, C72, C85, and C88 together coordinate Zn(2+). Mg(2+)-binding residues include D460, D462, and D464. C814, C888, C895, and C898 together coordinate Zn(2+).

This sequence belongs to the RNA polymerase beta' chain family. As to quaternary structure, the RNAP catalytic core consists of 2 alpha, 1 beta, 1 beta' and 1 omega subunit. When a sigma factor is associated with the core the holoenzyme is formed, which can initiate transcription. Requires Mg(2+) as cofactor. It depends on Zn(2+) as a cofactor.

The enzyme catalyses RNA(n) + a ribonucleoside 5'-triphosphate = RNA(n+1) + diphosphate. Its function is as follows. DNA-dependent RNA polymerase catalyzes the transcription of DNA into RNA using the four ribonucleoside triphosphates as substrates. In Colwellia psychrerythraea (strain 34H / ATCC BAA-681) (Vibrio psychroerythus), this protein is DNA-directed RNA polymerase subunit beta'.